A 98-amino-acid polypeptide reads, in one-letter code: DNA-binding protein Fis (98 aa).

The segment at residues 74-93 is a DNA-binding region (H-T-H motif); it reads QTRAALMMGINRGTLRKKLK.

This sequence belongs to the transcriptional regulatory Fis family. As to quaternary structure, homodimer.

Functionally, activates ribosomal RNA transcription. Plays a direct role in upstream activation of rRNA promoters. The chain is DNA-binding protein Fis from Pectobacterium atrosepticum (strain SCRI 1043 / ATCC BAA-672) (Erwinia carotovora subsp. atroseptica).